A 636-amino-acid polypeptide reads, in one-letter code: Molybdenum cofactor biosynthesis protein 1 (636 aa).

The molybdenum cofactor biosynthesis protein A stretch occupies residues 1 to 383 (MAARPAFGIV…QMKNRPMILI (383 aa)). The tract at residues 19-40 (RGCSSGAPVTQPRPGEPSRPTR) is disordered. S64 is subject to Phosphoserine. The Radical SAM core domain maps to 64–279 (SFGRQHSYLR…TIRQRWPGLE (216 aa)). GTP is bound at residue R73. 2 residues coordinate [4Fe-4S] cluster: C80 and C84. S-adenosyl-L-methionine is bound at residue Y86. C87 is a binding site for [4Fe-4S] cluster. A GTP-binding site is contributed by R123. An S-adenosyl-L-methionine-binding site is contributed by G127. T154 contacts GTP. S178 is an S-adenosyl-L-methionine binding site. N6-acetyllysine is present on K198. A GTP-binding site is contributed by K215. M249 contributes to the S-adenosyl-L-methionine binding site. Positions 312 and 315 each coordinate [4Fe-4S] cluster. Residue 317–319 (RLR) participates in GTP binding. Residue C329 coordinates [4Fe-4S] cluster. Residues 414-636 (QCLSDQMASL…GGQRGDFHRA (223 aa)) are molybdenum cofactor biosynthesis protein C. Residues 444-484 (SPQRHYSSYPDPDTHSKCLSTGSQAPDAPSGPGPTSNQLTH) are disordered. K528 is modified (N6-acetyllysine). D606 serves as the catalytic For molybdenum cofactor biosynthesis protein C activity.

In the C-terminal section; belongs to the MoaC family. The protein in the N-terminal section; belongs to the radical SAM superfamily. MoaA family. Isoform Mocs1a and isoform Mocs1b probably form a heterooligomer. [4Fe-4S] cluster is required as a cofactor.

It catalyses the reaction GTP + AH2 + S-adenosyl-L-methionine = (8S)-3',8-cyclo-7,8-dihydroguanosine 5'-triphosphate + 5'-deoxyadenosine + L-methionine + A + H(+). It carries out the reaction (8S)-3',8-cyclo-7,8-dihydroguanosine 5'-triphosphate = cyclic pyranopterin phosphate + diphosphate. The protein operates within cofactor biosynthesis; molybdopterin biosynthesis. Functionally, isoform Mocs1a and isoform Mocs1b probably form a complex that catalyzes the conversion of 5'-GTP to cyclic pyranopterin monophosphate (cPMP). Mocs1a catalyzes the cyclization of GTP to (8S)-3',8-cyclo-7,8-dihydroguanosine 5'-triphosphate and Mocs1b catalyzes the subsequent conversion of (8S)-3',8-cyclo-7,8-dihydroguanosine 5'-triphosphate to cPMP. The polypeptide is Molybdenum cofactor biosynthesis protein 1 (Mocs1) (Mus musculus (Mouse)).